Consider the following 515-residue polypeptide: Protein FAM98A (515 aa).

2 disordered regions span residues V297–G410 and S432–S515. Positions V302–E311 are enriched in basic and acidic residues. Gly residues predominate over residues W382–Q394. Over residues R444–S456 the composition is skewed to basic and acidic residues. The segment covering G457–G481 has biased composition (gly residues). Residues Y485–Q501 are compositionally biased toward low complexity. Over residues Y502–S515 the composition is skewed to polar residues.

This sequence belongs to the FAM98 family. As to quaternary structure, interacts (via N- and C-terminus) with DDX1. Interacts (via N- and C-terminus) with C14orf166. Interacts with FAM98B. Interacts with PLEKHM1 (via N- and C-terminus).

Functionally, positively stimulates PRMT1-induced protein arginine methylation. Involved in skeletal homeostasis. Positively regulates lysosome peripheral distribution and ruffled border formation in osteoclasts. This chain is Protein FAM98A, found in Mus musculus (Mouse).